The sequence spans 248 residues: Agamous-like MADS-box protein AGL1 (248 aa).

In terms of domain architecture, MADS-box spans 18–72 (RGKIEIKRIENTTNRQVTFCKRRNGLLKKAYELSVLCDAEVALVIFSTRGRLYEY). One can recognise a K-box domain in the interval 102–192 (TQYYQQEASK…RAKIAEGARL (91 aa)).

In terms of assembly, interacts with AGL15 and AGL16.

The protein localises to the nucleus. Probable transcription factor. Interacts genetically with TT16/AGL32 in a partially antagonistic manner during flower development. Is essential for the coordination of cell divisions in ovule, seed coat development and endosperm formation. This chain is Agamous-like MADS-box protein AGL1 (AGL1), found in Arabidopsis thaliana (Mouse-ear cress).